Reading from the N-terminus, the 375-residue chain is G-protein coupled estrogen receptor 1 (375 aa).

Methionine 1 is subject to N-acetylmethionine. The Extracellular segment spans residues 1–62; it reads MDVTSQARGV…QQYVIGLFLS (62 aa). N-linked (GlcNAc...) asparagine glycosylation is found at asparagine 25, asparagine 32, and asparagine 44. The helical transmembrane segment at 63 to 84 threads the bilayer; it reads CLYTIFLFPIGFVGNILILVVN. Residues 85-96 are Cytoplasmic-facing; sequence ISFREKMTIPDL. A helical transmembrane segment spans residues 97–120; it reads YFINLAVADLILVADSLIEVFNLH. Over 121–132 the chain is Extracellular; it reads ERYYDIAVLCTF. A disulfide bond links cysteine 130 and cysteine 207. The chain crosses the membrane as a helical span at residues 133-153; it reads MSLFLQVNMYSSVFFLTWMSF. The Cytoplasmic portion of the chain corresponds to 154-175; it reads DRYIALARAMRCSLFRTKHHAR. The chain crosses the membrane as a helical span at residues 176 to 194; that stretch reads LSCGLIWMASVSATLVPFT. Over 195–220 the chain is Extracellular; it reads AVHLQHTDEACFCFADVREVQWLEVT. Residues 221–236 traverse the membrane as a helical segment; sequence LGFIVPFAIIGLCYSL. The Cytoplasmic portion of the chain corresponds to 237–259; the sequence is IVRVLVRAHRHRGLRPRRQKALR. Residues 260 to 280 traverse the membrane as a helical segment; the sequence is MILAVVLVFFVCWLPENVFIS. Over 281–306 the chain is Extracellular; that stretch reads VHLLQRTQPGAAPCKQSFRHAHPLTG. A helical transmembrane segment spans residues 307–327; sequence HIVNLAAFSNSCLNPLIYSFL. The Cytoplasmic portion of the chain corresponds to 328 to 375; that stretch reads GETFRDKLRLYIEQKTNLPALNRFCHAALKAVIPDSTEQSDVRFSSAV.

This sequence belongs to the G-protein coupled receptor 1 family. As to quaternary structure, homodimer. Heterodimer; heterodimerizes with other G-protein-coupled receptor (GPCRs) like CRHR1, HTR1A and PAQR8. Interacts (via C-terminus tail motif) with DLG4 (via N-terminus tandem pair of PDZ domains); the interaction is direct and induces the increase of GPER1 protein levels residing at the plasma membrane surface in a estradiol-independent manner. Interacts with RAMP3; the interaction confers proper subcellular localization and function in cardioprotection. Interacts with KRT7 and KRT8. Interacts with EGFR; the interaction increases after agonist-induced stimulation in cancer-associated fibroblasts (CAF). Interacts with EGFR and ESR1. Post-translationally, ubiquitinated; ubiquitination occurs at the plasma membrane and leads to proteasome-mediated degradation. Glycosylated. In terms of tissue distribution, expressed in placenta, endothelial and epithelial cells, non laboring and laboring term myometrium, fibroblasts and cancer-associated fibroblasts (CAF), prostate cancer cells and invasive adenocarcinoma (at protein level). Ubiquitously expressed, but is most abundant in placenta. In brain regions, expressed as a 2.8 kb transcript in basal forebrain, frontal cortex, thalamus, hippocampus, caudate and putamen.

It is found in the nucleus. It localises to the cytoplasm. The protein localises to the perinuclear region. The protein resides in the cytoskeleton. Its subcellular location is the cell membrane. It is found in the basolateral cell membrane. It localises to the cytoplasmic vesicle membrane. The protein localises to the early endosome. The protein resides in the recycling endosome. Its subcellular location is the golgi apparatus membrane. It is found in the golgi apparatus. It localises to the trans-Golgi network. The protein localises to the endoplasmic reticulum membrane. The protein resides in the cell projection. Its subcellular location is the dendrite. It is found in the dendritic spine membrane. It localises to the axon. The protein localises to the postsynaptic density. The protein resides in the mitochondrion membrane. In terms of biological role, G-protein coupled estrogen receptor that binds to 17-beta-estradiol (E2) with high affinity, leading to rapid and transient activation of numerous intracellular signaling pathways. Stimulates cAMP production, calcium mobilization and tyrosine kinase Src inducing the release of heparin-bound epidermal growth factor (HB-EGF) and subsequent transactivation of the epidermal growth factor receptor (EGFR), activating downstream signaling pathways such as PI3K/Akt and ERK/MAPK. Mediates pleiotropic functions among others in the cardiovascular, endocrine, reproductive, immune and central nervous systems. Has a role in cardioprotection by reducing cardiac hypertrophy and perivascular fibrosis in a RAMP3-dependent manner. Regulates arterial blood pressure by stimulating vasodilation and reducing vascular smooth muscle and microvascular endothelial cell proliferation. Plays a role in blood glucose homeostasis contributing to the insulin secretion response by pancreatic beta cells. Triggers mitochondrial apoptosis during pachytene spermatocyte differentiation. Stimulates uterine epithelial cell proliferation. Enhances uterine contractility in response to oxytocin. Contributes to thymic atrophy by inducing apoptosis. Attenuates TNF-mediated endothelial expression of leukocyte adhesion molecules. Promotes neuritogenesis in developing hippocampal neurons. Plays a role in acute neuroprotection against NMDA-induced excitotoxic neuronal death. Increases firing activity and intracellular calcium oscillations in luteinizing hormone-releasing hormone (LHRH) neurons. Inhibits early osteoblast proliferation at growth plate during skeletal development. Inhibits mature adipocyte differentiation and lipid accumulation. Involved in the recruitment of beta-arrestin 2 ARRB2 at the plasma membrane in epithelial cells. Also functions as a receptor for aldosterone mediating rapid regulation of vascular contractibility through the PI3K/ERK signaling pathway. Involved in cancer progression regulation. Stimulates cancer-associated fibroblast (CAF) proliferation by a rapid genomic response through the EGFR/ERK transduction pathway. Associated with EGFR, may act as a transcription factor activating growth regulatory genes (c-fos, cyclin D1). Promotes integrin alpha-5/beta-1 and fibronectin (FN) matrix assembly in breast cancer cells. In Homo sapiens (Human), this protein is G-protein coupled estrogen receptor 1.